The chain runs to 489 residues: Nuclear distribution protein PAC1 (489 aa).

A coiled-coil region spans residues 66 to 98 (STVLRLQKKIIDLENEISNLNNIINSSNSDNNG). WD repeat units follow at residues 119-158 (QCEN…NTIP), 164-205 (AHTR…RTLN), 206-246 (GHEH…SLKS), 249-291 (GHSE…GLAM), 328-368 (IPLE…IAPH), 389-428 (GHSS…ETGS), and 437-486 (GHDG…NSIK).

It belongs to the WD repeat LIS1/nudF family. In terms of assembly, self-associates. Interacts with NDL1 and dynein.

The protein localises to the cytoplasm. It is found in the cytoskeleton. It localises to the spindle pole. Positively regulates the activity of the minus-end directed microtubule motor protein dynein. Plays a central role in positioning the mitotic spindle at the bud neck during cell division. Targets cytoplasmic dynein to microtubule plus ends, thereby promoting dynein-mediated microtubule sliding along the bud cortex and consequently the movement of the mitotic spindle to the bud neck. The protein is Nuclear distribution protein PAC1 of Candida dubliniensis (strain CD36 / ATCC MYA-646 / CBS 7987 / NCPF 3949 / NRRL Y-17841) (Yeast).